We begin with the raw amino-acid sequence, 183 residues long: Holliday junction branch migration complex subunit RuvA (183 aa).

The domain I stretch occupies residues 1–63 (MIVGLIGVVE…EDANLLYGFL (63 aa)). The tract at residues 64-139 (EESEKILFER…FFIQDENRPA (76 aa)) is domain II. Position 139 (alanine 139) is a region of interest, flexible linker. The segment at 139–183 (ARNEVFLALESLGFKSAEINKVLKTLKPNLSIEAAIKEALQQLRS) is domain III.

It belongs to the RuvA family. Homotetramer. Forms an RuvA(8)-RuvB(12)-Holliday junction (HJ) complex. HJ DNA is sandwiched between 2 RuvA tetramers; dsDNA enters through RuvA and exits via RuvB. An RuvB hexamer assembles on each DNA strand where it exits the tetramer. Each RuvB hexamer is contacted by two RuvA subunits (via domain III) on 2 adjacent RuvB subunits; this complex drives branch migration. In the full resolvosome a probable DNA-RuvA(4)-RuvB(12)-RuvC(2) complex forms which resolves the HJ.

It is found in the cytoplasm. Functionally, the RuvA-RuvB-RuvC complex processes Holliday junction (HJ) DNA during genetic recombination and DNA repair, while the RuvA-RuvB complex plays an important role in the rescue of blocked DNA replication forks via replication fork reversal (RFR). RuvA specifically binds to HJ cruciform DNA, conferring on it an open structure. The RuvB hexamer acts as an ATP-dependent pump, pulling dsDNA into and through the RuvAB complex. HJ branch migration allows RuvC to scan DNA until it finds its consensus sequence, where it cleaves and resolves the cruciform DNA. The chain is Holliday junction branch migration complex subunit RuvA from Helicobacter pylori (strain HPAG1).